Here is a 363-residue protein sequence, read N- to C-terminus: Probable L-tyrosine/L-aspartate decarboxylase (363 aa).

K224 bears the N6-(pyridoxal phosphate)lysine mark.

The protein belongs to the group II decarboxylase family. MfnA subfamily. Pyridoxal 5'-phosphate is required as a cofactor.

It carries out the reaction L-tyrosine + H(+) = tyramine + CO2. The enzyme catalyses L-aspartate + H(+) = beta-alanine + CO2. It functions in the pathway cofactor biosynthesis; methanofuran biosynthesis. Its pathway is cofactor biosynthesis; coenzyme A biosynthesis. Its function is as follows. Catalyzes the decarboxylation of L-tyrosine to produce tyramine for methanofuran biosynthesis. Can also catalyze the decarboxylation of L-aspartate to produce beta-alanine for coenzyme A (CoA) biosynthesis. This is Probable L-tyrosine/L-aspartate decarboxylase from Methanosphaerula palustris (strain ATCC BAA-1556 / DSM 19958 / E1-9c).